The chain runs to 591 residues: Aspartate--tRNA(Asp/Asn) ligase (591 aa).

L-aspartate is bound at residue glutamate 176. The aspartate stretch occupies residues glutamine 200–lysine 203. Arginine 222 contacts L-aspartate. ATP-binding positions include arginine 222 to glutamate 224 and glutamine 231. Residue histidine 450 coordinates L-aspartate. Glutamate 484 provides a ligand contact to ATP. Arginine 491 lines the L-aspartate pocket. Glycine 536–arginine 539 provides a ligand contact to ATP.

It belongs to the class-II aminoacyl-tRNA synthetase family. Type 1 subfamily. Homodimer.

The protein resides in the cytoplasm. It catalyses the reaction tRNA(Asx) + L-aspartate + ATP = L-aspartyl-tRNA(Asx) + AMP + diphosphate. Its function is as follows. Aspartyl-tRNA synthetase with relaxed tRNA specificity since it is able to aspartylate not only its cognate tRNA(Asp) but also tRNA(Asn). Reaction proceeds in two steps: L-aspartate is first activated by ATP to form Asp-AMP and then transferred to the acceptor end of tRNA(Asp/Asn). The chain is Aspartate--tRNA(Asp/Asn) ligase from Bacillus anthracis (strain CDC 684 / NRRL 3495).